Consider the following 253-residue polypeptide: Ribosomal RNA small subunit methyltransferase J (253 aa).

S-adenosyl-L-methionine is bound by residues 98–99 (RD), 114–115 (ER), 150–151 (SS), and aspartate 172.

The protein belongs to the methyltransferase superfamily. RsmJ family.

The protein localises to the cytoplasm. It catalyses the reaction guanosine(1516) in 16S rRNA + S-adenosyl-L-methionine = N(2)-methylguanosine(1516) in 16S rRNA + S-adenosyl-L-homocysteine + H(+). Its function is as follows. Specifically methylates the guanosine in position 1516 of 16S rRNA. This is Ribosomal RNA small subunit methyltransferase J from Shewanella pealeana (strain ATCC 700345 / ANG-SQ1).